The chain runs to 126 residues: Holo-[acyl-carrier-protein] synthase (126 aa).

Asp-8 and Glu-59 together coordinate Mg(2+).

It belongs to the P-Pant transferase superfamily. AcpS family. Mg(2+) is required as a cofactor.

Its subcellular location is the cytoplasm. It catalyses the reaction apo-[ACP] + CoA = holo-[ACP] + adenosine 3',5'-bisphosphate + H(+). Functionally, transfers the 4'-phosphopantetheine moiety from coenzyme A to a Ser of acyl-carrier-protein. In Rickettsia akari (strain Hartford), this protein is Holo-[acyl-carrier-protein] synthase.